The following is a 474-amino-acid chain: tRNA-2-methylthio-N(6)-dimethylallyladenosine synthase (474 aa).

In terms of domain architecture, MTTase N-terminal spans 3-120 (KKLHIKTWGC…LPDMIEQVRR (118 aa)). The [4Fe-4S] cluster site is built by Cys-12, Cys-49, Cys-83, Cys-157, Cys-161, and Cys-164. Residues 143 to 375 (RAEGPTAFVS…QDRITQQAMR (233 aa)) form the Radical SAM core domain. Residues 378-441 (RHMMGTVQRI…TNSLRGKFIR (64 aa)) enclose the TRAM domain.

Belongs to the methylthiotransferase family. MiaB subfamily. In terms of assembly, monomer. [4Fe-4S] cluster is required as a cofactor.

The protein localises to the cytoplasm. The enzyme catalyses N(6)-dimethylallyladenosine(37) in tRNA + (sulfur carrier)-SH + AH2 + 2 S-adenosyl-L-methionine = 2-methylsulfanyl-N(6)-dimethylallyladenosine(37) in tRNA + (sulfur carrier)-H + 5'-deoxyadenosine + L-methionine + A + S-adenosyl-L-homocysteine + 2 H(+). Catalyzes the methylthiolation of N6-(dimethylallyl)adenosine (i(6)A), leading to the formation of 2-methylthio-N6-(dimethylallyl)adenosine (ms(2)i(6)A) at position 37 in tRNAs that read codons beginning with uridine. This Shewanella putrefaciens (strain CN-32 / ATCC BAA-453) protein is tRNA-2-methylthio-N(6)-dimethylallyladenosine synthase.